The primary structure comprises 254 residues: Molybdate-binding protein ModA (254 aa).

An N-terminal signal peptide occupies residues 1-24 (MKKLTKISTALLIAGLGFSFAASA). The molybdate site is built by Ser33, Ser61, Ala146, Val173, and Tyr191.

It belongs to the bacterial solute-binding protein ModA family. The complex is composed of two ATP-binding proteins (ModC), two transmembrane proteins (ModB) and a solute-binding protein (ModA).

The protein localises to the periplasm. Involved in the transport of molybdenum into the cell. The protein is Molybdate-binding protein ModA (modA) of Haemophilus influenzae (strain ATCC 51907 / DSM 11121 / KW20 / Rd).